We begin with the raw amino-acid sequence, 313 residues long: Tetraspanning orphan receptor (313 aa).

At proline 1–tyrosine 54 the chain is on the extracellular side. Residues isoleucine 55–isoleucine 75 traverse the membrane as a helical segment. Topologically, residues threonine 76–leucine 82 are cytoplasmic. A helical transmembrane segment spans residues leucine 83 to phenylalanine 103. Topologically, residues methionine 104–threonine 129 are extracellular. A helical membrane pass occupies residues phenylalanine 130–valine 150. The Cytoplasmic portion of the chain corresponds to tryptophan 151 to cysteine 313. 2 disordered regions span residues asparagine 192–alanine 218 and asparagine 279–cysteine 313. The segment covering asparagine 279 to threonine 295 has biased composition (low complexity). The segment covering glutamine 301–cysteine 313 has biased composition (polar residues).

Interacts (via N-terminal extracellular domain) with human C2a. Post-translationally, phosphorylated on tyrosine residues.

Its subcellular location is the cell membrane. Cell surface receptor that binds to human complement C2a protein. This results in inhibition of the classical and lectin pathways of complement activation, probably due to interference with binding of C2a to C4b and interference with cleavage by C1 or MASP2 such that C3 convertase cannot be formed. This infers resistance to complement-mediated cell lysis, allowing parasite survival and infection. In Schistosoma haematobium (Blood fluke), this protein is Tetraspanning orphan receptor.